Consider the following 120-residue polypeptide: Large ribosomal subunit protein bL20 (120 aa).

It belongs to the bacterial ribosomal protein bL20 family.

Its function is as follows. Binds directly to 23S ribosomal RNA and is necessary for the in vitro assembly process of the 50S ribosomal subunit. It is not involved in the protein synthesizing functions of that subunit. The sequence is that of Large ribosomal subunit protein bL20 from Pseudoalteromonas translucida (strain TAC 125).